The following is a 470-amino-acid chain: Ubiquitin carboxyl-terminal hydrolase calypso (470 aa).

The UCH catalytic domain maps to 11–241 (GWLELESDPG…ITHKLKMLRT (231 aa)). The Nucleophile role is filled by cysteine 98. The active-site Proton donor is histidine 177. Residues 260-280 (ESRSQAEIRETVDKIKKEEQE) adopt a coiled-coil conformation. Residues 392 to 420 (NYDEFICTFLSMLAYQGELGDLVTQHLVT) form the ULD domain. Residues 422–470 (RKPSLGGVQNSGSRGVVRNYNKKSTTNGSSPKTPSSKRRRGRTKYRKRK) form a positively charged C-terminal tail required for binding nucleosomes region. Over residues 423-434 (KPSLGGVQNSGS) the composition is skewed to polar residues. A disordered region spans residues 423–470 (KPSLGGVQNSGSRGVVRNYNKKSTTNGSSPKTPSSKRRRGRTKYRKRK). Over residues 456–470 (SSKRRRGRTKYRKRK) the composition is skewed to basic residues.

The protein belongs to the peptidase C12 family. BAP1 subfamily. In terms of assembly, catalytic component of the polycomb repressive deubiquitinase (PR-DUB) complex, at least composed of caly/calypso, Asx and sba (MBD5/6 homolog). The PR-DUB complex associates with nucleosomes to mediate deubiquitination of histone H2AK118ub1 substrates; the association requires the positively charged C-terminal tail of caly, probably due to direct binding of DNA. Interacts (via ULD domain) with Asx (via DEUBAD domain); the interaction produces a stable heterodimer with a composite binding site for ubiquitin. Homodimerizes (via coiled-coil hinge-region between the UCH and ULD domains) to mediate assembly of 2 copies of the caly-Asx heterodimer into a bisymmetric tetramer; dimerization enhances PR-DUB association with nucleosomes.

It localises to the nucleus. The enzyme catalyses Thiol-dependent hydrolysis of ester, thioester, amide, peptide and isopeptide bonds formed by the C-terminal Gly of ubiquitin (a 76-residue protein attached to proteins as an intracellular targeting signal).. In terms of biological role, catalytic component of the polycomb repressive deubiquitinase (PR-DUB) complex, a complex that specifically mediates deubiquitination of histone H2A monoubiquitinated at 'Lys-119' (H2AK118ub1). Mediates bisymmetric organization of the PR-DUB complex and is involved in association with nucleosomes to mediate deubiquitination. Does not deubiquitinate monoubiquitinated histone H2B. Required to maintain the transcriptionally repressive state of homeotic genes throughout development. The PR-DUB complex has weak or no activity toward 'Lys-48'- and 'Lys-63'-linked polyubiquitin chains. Polycomb group (PcG) protein. This chain is Ubiquitin carboxyl-terminal hydrolase calypso, found in Culex quinquefasciatus (Southern house mosquito).